A 213-amino-acid polypeptide reads, in one-letter code: Outer-membrane lipoprotein LolB (213 aa).

The signal sequence occupies residues 1–24; sequence MNNLSYFTKTKLVWVILSLSLLSA. The N-palmitoyl cysteine moiety is linked to residue Cys25. Cys25 carries the S-diacylglycerol cysteine lipid modification.

This sequence belongs to the LolB family. Monomer.

The protein localises to the cell outer membrane. In terms of biological role, plays a critical role in the incorporation of lipoproteins in the outer membrane after they are released by the LolA protein. This chain is Outer-membrane lipoprotein LolB, found in Shewanella woodyi (strain ATCC 51908 / MS32).